Here is a 378-residue protein sequence, read N- to C-terminus: Chaperone protein DnaJ (378 aa).

One can recognise a J domain in the interval 5–70 (DYYQILGIPK…EKRTAYDQYG (66 aa)). The CR-type zinc-finger motif lies at 133-211 (GTTKEIRIPT…CRGQGRIKTN (79 aa)). Zn(2+)-binding residues include C146, C149, C163, C166, C185, C188, C199, and C202. 4 CXXCXGXG motif repeats span residues 146 to 153 (CKTCYGMG), 163 to 170 (CSTCHGKG), 185 to 192 (CPTCNGIG), and 199 to 206 (CRMCRGQG).

Belongs to the DnaJ family. In terms of assembly, homodimer. The cofactor is Zn(2+).

It localises to the cytoplasm. In terms of biological role, participates actively in the response to hyperosmotic and heat shock by preventing the aggregation of stress-denatured proteins and by disaggregating proteins, also in an autonomous, DnaK-independent fashion. Unfolded proteins bind initially to DnaJ; upon interaction with the DnaJ-bound protein, DnaK hydrolyzes its bound ATP, resulting in the formation of a stable complex. GrpE releases ADP from DnaK; ATP binding to DnaK triggers the release of the substrate protein, thus completing the reaction cycle. Several rounds of ATP-dependent interactions between DnaJ, DnaK and GrpE are required for fully efficient folding. Also involved, together with DnaK and GrpE, in the DNA replication of plasmids through activation of initiation proteins. In Buchnera aphidicola subsp. Schizaphis graminum (strain Sg), this protein is Chaperone protein DnaJ.